The following is a 119-amino-acid chain: Protein TusC (119 aa).

It belongs to the DsrF/TusC family. As to quaternary structure, heterohexamer, formed by a dimer of trimers. The hexameric TusBCD complex contains 2 copies each of TusB, TusC and TusD. The TusBCD complex interacts with TusE.

The protein resides in the cytoplasm. Part of a sulfur-relay system required for 2-thiolation of 5-methylaminomethyl-2-thiouridine (mnm(5)s(2)U) at tRNA wobble positions. The chain is Protein TusC from Escherichia coli O45:K1 (strain S88 / ExPEC).